The primary structure comprises 311 residues: Heparan sulfate glucosamine 3-O-sulfotransferase 1 (311 aa).

The first 20 residues, 1-20 (MTLLLLGAVLLVAQPQLVPS), serve as a signal peptide directing secretion. N-linked (GlcNAc...) asparagine glycosylation is present at N52. Residues 68–72 (KGGTR), R151, and S159 each bind 3'-phosphoadenylyl sulfate. N196, N246, and N253 each carry an N-linked (GlcNAc...) asparagine glycan. 3'-phosphoadenylyl sulfate is bound at residue Y259. C260 and C269 are oxidised to a cystine. 274–278 (KGRAH) serves as a coordination point for 3'-phosphoadenylyl sulfate.

It belongs to the sulfotransferase 1 family.

Its subcellular location is the golgi apparatus lumen. It catalyses the reaction alpha-D-glucosaminyl-[heparan sulfate](n) + 3'-phosphoadenylyl sulfate = 3-sulfo-alpha-D-glucosaminyl-[heparan sulfate](n) + adenosine 3',5'-bisphosphate + H(+). Sulfotransferase that utilizes 3'-phospho-5'-adenylyl sulfate (PAPS) to catalyze the transfer of a sulfo group to position 3 of glucosamine residues in heparan. Catalyzes the rate limiting step in the biosynthesis of heparan sulfate (HSact). This modification is a crucial step in the biosynthesis of anticoagulant heparan sulfate as it completes the structure of the antithrombin pentasaccharide binding site. The protein is Heparan sulfate glucosamine 3-O-sulfotransferase 1 (Hs3st1) of Rattus norvegicus (Rat).